The following is a 514-amino-acid chain: Efflux pump aflT (514 aa).

The next 10 helical transmembrane spans lie at 13–33, 61–81, 85–105, 116–136, 146–166, 174–194, 218–238, 247–267, 289–309, and 321–341; these read ISGMKLYLIVLSLLLAVFCVA, SAYLLTTCAFQLLYGKLYALF, WVFLVALCIFEVGSLICGVAP, IAGVGSSGIFTGALVTIAHIV, GLLGGMYGIASVAGPLLGGAF, WCFYINLPVGGVTAVVILFLL, GTIVFTPSIICVLLALQWGGV, IIALFVLFGVLLITFIIIQVL, VFVFFIGASMFVMIYYVPIWF, and GIDSIALILANTAGAIISGAV. The N-linked (GlcNAc...) asparagine glycan is linked to Asn343. 4 consecutive transmembrane segments (helical) span residues 351 to 371, 378 to 398, 411 to 431, and 485 to 505; these read WFIVSSVIMSIGAGCLTLFTV, WIGFLFLYGIGVGFGFQQGAV, IGTALIWFVQMLGGALFTSVA, and LDVFQVALICSCLSILGAVGI.

It belongs to the major facilitator superfamily. TCR/Tet family.

Its subcellular location is the cell membrane. Functionally, efflux pump; part of the gene cluster that mediates the biosynthesis of aflatoxins. In Aspergillus parasiticus (strain ATCC 56775 / NRRL 5862 / SRRC 143 / SU-1), this protein is Efflux pump aflT.